A 382-amino-acid polypeptide reads, in one-letter code: Zinc metalloproteinase nas-7 (382 aa).

A signal peptide spans 1-18 (MLLPWIITIVTVIPATLG). Residues 19 to 79 (HRNRVQDDEM…DIRLPRRHKR (61 aa)) constitute a propeptide that is removed on maturation. The region spanning 80-273 (NGVSRAAKLW…SKINRMYNCP (194 aa)) is the Peptidase M12A domain. 5 disulfide bridges follow: Cys122–Cys272, Cys144–Cys163, Cys348–Cys382, Cys355–Cys375, and Cys362–Cys379. His171 serves as a coordination point for Zn(2+). Glu172 is a catalytic residue. Positions 175 and 181 each coordinate Zn(2+). Residues 348 to 382 (CEDRITVCWWTADRCRSPAIYQVMSSLCPKTCKFC) enclose the ShKT domain.

The cofactor is Zn(2+). In terms of tissue distribution, expressed in the head of adult hermaphrodites but not within pharynx cells. Expressed in pharyngeal muscles, mc cells, intestine, hypodermal seam cells, arcade cells, spermatheca, vulva and rectal epithelial cells.

Its subcellular location is the secreted. Its function is as follows. Metalloprotease. The chain is Zinc metalloproteinase nas-7 (nas-7) from Caenorhabditis elegans.